We begin with the raw amino-acid sequence, 221 residues long: Octanoyltransferase (221 aa).

A BPL/LPL catalytic domain is found at Gly31–Pro216. Residues Arg76–His83, Ala145–Gly147, and Gly159–Ala161 each bind substrate. Cys177 functions as the Acyl-thioester intermediate in the catalytic mechanism.

It belongs to the LipB family.

It is found in the cytoplasm. The catalysed reaction is octanoyl-[ACP] + L-lysyl-[protein] = N(6)-octanoyl-L-lysyl-[protein] + holo-[ACP] + H(+). Its pathway is protein modification; protein lipoylation via endogenous pathway; protein N(6)-(lipoyl)lysine from octanoyl-[acyl-carrier-protein]: step 1/2. Catalyzes the transfer of endogenously produced octanoic acid from octanoyl-acyl-carrier-protein onto the lipoyl domains of lipoate-dependent enzymes. Lipoyl-ACP can also act as a substrate although octanoyl-ACP is likely to be the physiological substrate. The sequence is that of Octanoyltransferase from Chloroflexus aggregans (strain MD-66 / DSM 9485).